The primary structure comprises 219 residues: Probable nicotinate-nucleotide adenylyltransferase (219 aa).

The protein belongs to the NadD family.

The enzyme catalyses nicotinate beta-D-ribonucleotide + ATP + H(+) = deamido-NAD(+) + diphosphate. It functions in the pathway cofactor biosynthesis; NAD(+) biosynthesis; deamido-NAD(+) from nicotinate D-ribonucleotide: step 1/1. Catalyzes the reversible adenylation of nicotinate mononucleotide (NaMN) to nicotinic acid adenine dinucleotide (NaAD). The polypeptide is Probable nicotinate-nucleotide adenylyltransferase (Hahella chejuensis (strain KCTC 2396)).